The primary structure comprises 248 residues: Probable transcriptional regulatory protein Msil_2305 (248 aa).

This sequence belongs to the TACO1 family.

It is found in the cytoplasm. The chain is Probable transcriptional regulatory protein Msil_2305 from Methylocella silvestris (strain DSM 15510 / CIP 108128 / LMG 27833 / NCIMB 13906 / BL2).